We begin with the raw amino-acid sequence, 370 residues long: Anhydro-N-acetylmuramic acid kinase (370 aa).

13-20 (GTSMDGVD) lines the ATP pocket.

It belongs to the anhydro-N-acetylmuramic acid kinase family.

It catalyses the reaction 1,6-anhydro-N-acetyl-beta-muramate + ATP + H2O = N-acetyl-D-muramate 6-phosphate + ADP + H(+). Its pathway is amino-sugar metabolism; 1,6-anhydro-N-acetylmuramate degradation. It functions in the pathway cell wall biogenesis; peptidoglycan recycling. Catalyzes the specific phosphorylation of 1,6-anhydro-N-acetylmuramic acid (anhMurNAc) with the simultaneous cleavage of the 1,6-anhydro ring, generating MurNAc-6-P. Is required for the utilization of anhMurNAc either imported from the medium or derived from its own cell wall murein, and thus plays a role in cell wall recycling. The chain is Anhydro-N-acetylmuramic acid kinase from Vibrio vulnificus (strain CMCP6).